A 679-amino-acid polypeptide reads, in one-letter code: Methionine--tRNA ligase (679 aa).

Residues 15-25 carry the 'HIGH' region motif; it reads PYANGSIHLGH. Cysteine 146, cysteine 149, cysteine 159, and cysteine 162 together coordinate Zn(2+). The short motif at 332 to 336 is the 'KMSKS' region element; the sequence is KMSKS. Lysine 335 provides a ligand contact to ATP. Residues 577 to 679 form the tRNA-binding domain; that stretch reads DFAKVDMRVA…AGALPGMPVK (103 aa).

The protein belongs to the class-I aminoacyl-tRNA synthetase family. MetG type 1 subfamily. Homodimer. Zn(2+) is required as a cofactor.

It is found in the cytoplasm. It catalyses the reaction tRNA(Met) + L-methionine + ATP = L-methionyl-tRNA(Met) + AMP + diphosphate. Functionally, is required not only for elongation of protein synthesis but also for the initiation of all mRNA translation through initiator tRNA(fMet) aminoacylation. The polypeptide is Methionine--tRNA ligase (Sodalis glossinidius (strain morsitans)).